The following is a 171-amino-acid chain: Disulfide bond formation protein B (171 aa).

Residues 1–10 are Cytoplasmic-facing; the sequence is MQRLLTYRAL. The helical transmembrane segment at 11-27 threads the bilayer; the sequence is NFILFIASVVAMLFAII. Residues 28–46 are Periplasmic-facing; that stretch reads FLQNYKGLEPCPLCIFQRI. A disulfide bridge links C38 with C41. A helical transmembrane segment spans residues 47 to 63; that stretch reads GLMVMGGFSLIAAVGHP. Topologically, residues 64-70 are cytoplasmic; it reads KKMGMQL. The helical transmembrane segment at 71-88 threads the bilayer; sequence LLWIGSMAGILWSAGVAA. Residues 89-145 lie on the Periplasmic side of the membrane; it reads RHVWIQHLPADQVPACGPGLDYFLEALPMKQVINQVLSGSGECAEISWRFLGLSIPE. The cysteines at positions 104 and 131 are disulfide-linked. The helical transmembrane segment at 146-164 threads the bilayer; sequence QALILFTALILVNLLVLWR. Residues 165–171 lie on the Cytoplasmic side of the membrane; that stretch reads IISKRTA.

The protein belongs to the DsbB family.

The protein resides in the cell inner membrane. Its function is as follows. Required for disulfide bond formation in some periplasmic proteins. Acts by oxidizing the DsbA protein. In Psychrobacter sp. (strain PRwf-1), this protein is Disulfide bond formation protein B.